Here is a 492-residue protein sequence, read N- to C-terminus: Ribulose bisphosphate carboxylase large chain (492 aa).

Substrate is bound by residues Asn131 and Thr181. Catalysis depends on Lys183, which acts as the Proton acceptor. Substrate is bound at residue Lys185. 3 residues coordinate Mg(2+): Lys209, Asp211, and Glu212. Lys209 bears the N6-carboxylysine mark. His301 acts as the Proton acceptor in catalysis. Arg302, His334, and Ser386 together coordinate substrate.

This sequence belongs to the RuBisCO large chain family. Type I subfamily. As to quaternary structure, heterohexadecamer of 8 large chains and 8 small chains. Mg(2+) is required as a cofactor.

It carries out the reaction 2 (2R)-3-phosphoglycerate + 2 H(+) = D-ribulose 1,5-bisphosphate + CO2 + H2O. The catalysed reaction is D-ribulose 1,5-bisphosphate + O2 = 2-phosphoglycolate + (2R)-3-phosphoglycerate + 2 H(+). Its function is as follows. RuBisCO catalyzes two reactions: the carboxylation of D-ribulose 1,5-bisphosphate, the primary event in carbon dioxide fixation, as well as the oxidative fragmentation of the pentose substrate. Both reactions occur simultaneously and in competition at the same active site. The sequence is that of Ribulose bisphosphate carboxylase large chain from Nitrosococcus oceani (strain ATCC 19707 / BCRC 17464 / JCM 30415 / NCIMB 11848 / C-107).